Consider the following 1135-residue polypeptide: DNA-directed RNA polymerase I subunit RPA2 (1135 aa).

The tract at residues 1–26 (MDVDGRWRNLPSGPSLKHLTDPSYGI) is disordered. Arg180 is an RNA binding site. Positions 194-208 (VRPKWKSRGLGYTQF) are loop B. Residues 236 to 247 (LNFIYRKELFFL) form a loop A region. Asp367 serves as a coordination point for RNA. Fork loop stretches follow at residues 439-453 (LRSK…DSGL) and 474-489 (RGAA…VRRL). Asp755 contacts Mg(2+). Lys890 serves as a coordination point for RNA. Residues Lys1020 and Arg1036 each contribute to the DNA site. At Ser1051 the chain carries Phosphoserine. The Zn(2+) site is built by Cys1070, Cys1073, Cys1098, and Cys1101. The C4-type zinc finger occupies 1070-1101 (CVECGSLLSPLLEKPPPSWSAMRNRKYNCTVC).

It belongs to the RNA polymerase beta chain family. As to quaternary structure, component of the RNA polymerase I (Pol I) complex consisting of 13 subunits: a ten-subunit catalytic core composed of POLR1A/RPA1, POLR1B/RPA2, POLR1C/RPAC1, POLR1D/RPAC2, POLR1H/RPA12, POLR2E/RPABC1, POLR2F/RPABC2, POLR2H/RPABC3, POLR2K/RPABC4 and POLR2L/RPABC5; a mobile stalk subunit POLR1F/RPA43 protruding from the core and additional subunits homologous to general transcription factors POLR1E/RPA49 and POLR1G/RPA34. Part of Pol I pre-initiation complex (PIC), in which Pol I core assembles with RRN3 and promoter-bound UTBF and SL1/TIF-IB complex. The cofactor is Mg(2+).

Its subcellular location is the nucleus. It is found in the nucleolus. The protein localises to the chromosome. The catalysed reaction is RNA(n) + a ribonucleoside 5'-triphosphate = RNA(n+1) + diphosphate. Its function is as follows. Catalytic core component of RNA polymerase I (Pol I), a DNA-dependent RNA polymerase which synthesizes ribosomal RNA precursors using the four ribonucleoside triphosphates as substrates. Transcribes 47S pre-rRNAs from multicopy rRNA gene clusters, giving rise to 5.8S, 18S and 28S ribosomal RNAs. Pol I-mediated transcription cycle proceeds through transcription initiation, transcription elongation and transcription termination stages. During transcription initiation, Pol I pre-initiation complex (PIC) is recruited by the selectivity factor 1 (SL1/TIF-IB) complex bound to the core promoter that precedes an rDNA repeat unit. The PIC assembly bends the promoter favoring the formation of the transcription bubble and promoter escape. Once the polymerase has escaped from the promoter it enters the elongation phase during which RNA is actively polymerized, based on complementarity with the template DNA strand. Highly processive, assembles in structures referred to as 'Miller trees' where many elongating Pol I complexes queue and transcribe the same rDNA coding regions. At terminator sequences downstream of the rDNA gene, PTRF interacts with Pol I and halts Pol I transcription leading to the release of the RNA transcript and polymerase from the DNA. Forms Pol I active center together with the largest subunit POLR1A/RPA1. Appends one nucleotide at a time to the 3' end of the nascent RNA, with POLR1A/RPA1 contributing a Mg(2+)-coordinating DxDGD motif, and POLR1B/RPA2 participating in the coordination of a second Mg(2+) ion and providing lysine residues believed to facilitate Watson-Crick base pairing between the incoming nucleotide and the template base. Typically, Mg(2+) ions direct a 5' nucleoside triphosphate to form a phosphodiester bond with the 3' hydroxyl of the preceding nucleotide of the nascent RNA, with the elimination of pyrophosphate. Has proofreading activity: Pauses and backtracks to allow the cleavage of a missincorporated nucleotide via POLR1H/RPA12. High Pol I processivity is associated with decreased transcription fidelity. In Mus musculus (Mouse), this protein is DNA-directed RNA polymerase I subunit RPA2.